A 164-amino-acid chain; its full sequence is Ferredoxin-type protein NapF (164 aa).

3 consecutive 4Fe-4S ferredoxin-type domains span residues 28–57 (GDESHFLTHCTRCDACINACENNILQRGAG), 58–89 (GYPSVNFKNNECSFCYACAQACPESLFSPRHT), and 132–161 (YQPQLNSQLCNGCGACAASCPVSAITAEYL). 12 residues coordinate [4Fe-4S] cluster: cysteine 37, cysteine 40, cysteine 43, cysteine 47, cysteine 69, cysteine 72, cysteine 75, cysteine 79, cysteine 141, cysteine 144, cysteine 147, and cysteine 151.

This sequence belongs to the NapF family. In terms of assembly, interacts with the cytoplasmic NapA precursor. The cofactor is [4Fe-4S] cluster.

Its subcellular location is the cytoplasm. Its function is as follows. Could be involved in the maturation of NapA, the catalytic subunit of the periplasmic nitrate reductase, before its export into the periplasm. The chain is Ferredoxin-type protein NapF from Escherichia coli O157:H7.